A 479-amino-acid chain; its full sequence is HSPB1-associated protein 1 (479 aa).

The segment at 1–25 (MEAGCEGSSPQTLGERTMGEEGERV) is disordered. An interaction with HSPB1 region spans residues 88–208 (ETECSYVDAT…EDTPFLYPTR (121 aa)). Residues 124 to 288 (WAYADYKYFV…HLARVEEAVT (165 aa)) enclose the JmjC domain. Positions 347–412 (PRANGEEPGV…GDSQECTSRN (66 aa)) are disordered. Residues 356-369 (VQEHMEVEQARDPS) show a composition bias toward basic and acidic residues.

In terms of assembly, interacts with CRYAB and HSPB1. Widely expressed. Highly expressed by Sertoli cells in testis (at protein level).

The protein resides in the cytoplasm. Functionally, may play a role in cellular stress response. The polypeptide is HSPB1-associated protein 1 (Hspbap1) (Rattus norvegicus (Rat)).